The sequence spans 275 residues: Large ribosomal subunit protein uL2 (275 aa).

Residues 208-275 (AGAKRWRGRR…NMIIRDRRKK (68 aa)) form a disordered region. 2 stretches are compositionally biased toward basic residues: residues 209–219 (GAKRWRGRRPT) and 254–263 (KGYKTRRNKR).

This sequence belongs to the universal ribosomal protein uL2 family. As to quaternary structure, part of the 50S ribosomal subunit. Forms a bridge to the 30S subunit in the 70S ribosome.

Functionally, one of the primary rRNA binding proteins. Required for association of the 30S and 50S subunits to form the 70S ribosome, for tRNA binding and peptide bond formation. It has been suggested to have peptidyltransferase activity; this is somewhat controversial. Makes several contacts with the 16S rRNA in the 70S ribosome. In Coxiella burnetii (strain CbuG_Q212) (Coxiella burnetii (strain Q212)), this protein is Large ribosomal subunit protein uL2.